Consider the following 474-residue polypeptide: Cytochrome c biogenesis protein CcsB (474 aa).

Helical transmembrane passes span 36 to 56, 96 to 116, and 182 to 202; these read LKLAIGLFLAIAAASIAGTVI, SWWFVALLLLLATSLTICTFR, and VGPIVVHVSLLLIMAGAMIGA.

The protein belongs to the Ccs1/CcsB family. In terms of assembly, may interact with CcsA.

It localises to the cell inner membrane. Required during biogenesis of c-type cytochromes (cytochrome c6 and cytochrome f) at the step of heme attachment. The chain is Cytochrome c biogenesis protein CcsB from Gloeobacter violaceus (strain ATCC 29082 / PCC 7421).